A 177-amino-acid chain; its full sequence is Large ribosomal subunit protein uL6 (177 aa).

It belongs to the universal ribosomal protein uL6 family. In terms of assembly, part of the 50S ribosomal subunit.

Functionally, this protein binds to the 23S rRNA, and is important in its secondary structure. It is located near the subunit interface in the base of the L7/L12 stalk, and near the tRNA binding site of the peptidyltransferase center. In Cupriavidus pinatubonensis (strain JMP 134 / LMG 1197) (Cupriavidus necator (strain JMP 134)), this protein is Large ribosomal subunit protein uL6.